The sequence spans 527 residues: Probable protein kinase UbiB (527 aa).

The region spanning 118 to 501 is the Protein kinase domain; that stretch reads DFERVPVASA…QKRTNRLLQG (384 aa). ATP contacts are provided by residues 124 to 132 and Lys-150; that span reads VASASIAQV. Residue Asp-285 is the Proton acceptor of the active site. A helical membrane pass occupies residues 502–522; sequence LLMFGVAVGVGAVLARAWLAI.

It belongs to the ABC1 family. UbiB subfamily.

It is found in the cell inner membrane. It participates in cofactor biosynthesis; ubiquinone biosynthesis [regulation]. Its function is as follows. Is probably a protein kinase regulator of UbiI activity which is involved in aerobic coenzyme Q (ubiquinone) biosynthesis. The chain is Probable protein kinase UbiB from Paraburkholderia phymatum (strain DSM 17167 / CIP 108236 / LMG 21445 / STM815) (Burkholderia phymatum).